The primary structure comprises 195 residues: Magnetosome membrane protein 22 (195 aa).

The span at 1–28 shows a compositional bias: low complexity; sequence MAAQTAASEAPAPAAAPADSPTTAGPTP. Residues 1 to 31 form a disordered region; sequence MAAQTAASEAPAPAAAPADSPTTAGPTPDSV. 3 consecutive transmembrane segments (helical) span residues 45–65, 90–110, and 115–135; these read VLAAVAASIVPVPLFDIAAVV, SVIASLAGGVVGYGAGMAVAV, and LIPGVGWMLGMVSLPVIAGAT.

The protein localises to the magnetosome membrane. This chain is Magnetosome membrane protein 22, found in Magnetospirillum gryphiswaldense (strain DSM 6361 / JCM 21280 / NBRC 15271 / MSR-1).